Consider the following 786-residue polypeptide: Mitochondrial intermediate peptidase (786 aa).

Residues 1–29 constitute a mitochondrion transit peptide; sequence MSSILLRSYRHHAKVWTRPSSKSSFIRSL. Residue H567 participates in Zn(2+) binding. Residue E568 is part of the active site. Positions 571 and 574 each coordinate Zn(2+).

This sequence belongs to the peptidase M3 family. Requires Zn(2+) as cofactor.

Its subcellular location is the mitochondrion matrix. The enzyme catalyses Release of an N-terminal octapeptide as second stage of processing of some proteins imported into the mitochondrion.. Cleaves proteins, imported into the mitochondrion, to their mature size. While most mitochondrial precursor proteins are processed to the mature form in one step by mitochondrial processing peptidase (MPP), the sequential cleavage by MIP of an octapeptide after initial processing by MPP is a required step for a subgroup of nuclear-encoded precursor proteins destined for the matrix or the inner membrane. This is Mitochondrial intermediate peptidase (OCT1) from Meyerozyma guilliermondii (strain ATCC 6260 / CBS 566 / DSM 6381 / JCM 1539 / NBRC 10279 / NRRL Y-324) (Yeast).